A 156-amino-acid chain; its full sequence is Ribosomal RNA large subunit methyltransferase H (156 aa).

S-adenosyl-L-methionine is bound by residues leucine 73, glycine 104, and 123–128; that span reads LSPLTL.

Belongs to the RNA methyltransferase RlmH family. Homodimer.

It localises to the cytoplasm. It catalyses the reaction pseudouridine(1915) in 23S rRNA + S-adenosyl-L-methionine = N(3)-methylpseudouridine(1915) in 23S rRNA + S-adenosyl-L-homocysteine + H(+). Specifically methylates the pseudouridine at position 1915 (m3Psi1915) in 23S rRNA. This is Ribosomal RNA large subunit methyltransferase H from Yersinia pseudotuberculosis serotype O:1b (strain IP 31758).